A 129-amino-acid polypeptide reads, in one-letter code: 4-amino-4-deoxychorismate mutase (129 aa).

The Chorismate mutase domain maps to 16 to 107 (AAATDPLDAL…ETCRLEDEWI (92 aa)).

The enzyme catalyses 4-amino-4-deoxychorismate = 4-amino-4-deoxyprephenate. Its pathway is antibiotic biosynthesis. Its function is as follows. Involved in pristinamycin I biosynthesis. Probably catalyzes the conversion of 4-amino-4-deoxychorismate to 4-amino-4-deoxyprephenate. The polypeptide is 4-amino-4-deoxychorismate mutase (Streptomyces pristinaespiralis).